Reading from the N-terminus, the 296-residue chain is D-alanine--D-alanine ligase (296 aa).

In terms of domain architecture, ATP-grasp spans 103 to 293; the sequence is KEILMHHRMP…FDSFVKRIIE (191 aa). Position 129–180 (129–180) interacts with ATP; it reads ISFPVAVKPSSGGSSIATFKVKSIQELKHAYEEASKYGEVMIEQWVTGKEIT. 3 residues coordinate Mg(2+): aspartate 247, glutamate 260, and asparagine 262.

The protein belongs to the D-alanine--D-alanine ligase family. The cofactor is Mg(2+). Mn(2+) is required as a cofactor.

The protein localises to the cytoplasm. It catalyses the reaction 2 D-alanine + ATP = D-alanyl-D-alanine + ADP + phosphate + H(+). Its pathway is cell wall biogenesis; peptidoglycan biosynthesis. Its function is as follows. Cell wall formation. In Francisella tularensis subsp. tularensis (strain FSC 198), this protein is D-alanine--D-alanine ligase.